Here is a 165-residue protein sequence, read N- to C-terminus: Probable chemoreceptor glutamine deamidase CheD (165 aa).

Belongs to the CheD family.

The enzyme catalyses L-glutaminyl-[protein] + H2O = L-glutamyl-[protein] + NH4(+). Functionally, probably deamidates glutamine residues to glutamate on methyl-accepting chemotaxis receptors (MCPs), playing an important role in chemotaxis. The protein is Probable chemoreceptor glutamine deamidase CheD of Symbiobacterium thermophilum (strain DSM 24528 / JCM 14929 / IAM 14863 / T).